The primary structure comprises 780 residues: RNA-binding protein Pasilla (780 aa).

Disordered stretches follow at residues 31-50 (LQHQ…QQLE), 76-113 (QPRH…SSSI), and 150-190 (QIES…ATAS). 3 stretches are compositionally biased toward low complexity: residues 79–91 (HSTT…STHS), 99–113 (SSNS…SSSI), and 176–190 (PNGT…ATAS). 3 KH domains span residues 273–340 (TYHM…MEFI), 366–432 (DKQV…CKMI), and 691–758 (KDSK…QYLI). Residues 674 to 693 (AQLGGLSKSPTPGDLSSKDS) form a disordered region. The tract at residues 686-776 (GDLSSKDSKN…TKRARQIPLT (91 aa)) is required for RNA binding.

As to expression, expressed in the central nervous system in mushroom body neurons (at protein level).

The protein resides in the nucleus. Its subcellular location is the cytoplasm. Functionally, functions to regulate alternative splicing in neurons by binding pre-mRNA in a sequence-specific manner to activate exon inclusion. Plays a role in long-term memory formation by processing the unspliced Orb2-isoform A (Orb2A) mRNA and thereby controlling Orb2A protein abundance. The chain is RNA-binding protein Pasilla from Drosophila melanogaster (Fruit fly).